A 526-amino-acid chain; its full sequence is Meiotically up-regulated gene 99 protein, mitochondrial (526 aa).

Helical transmembrane passes span 398-418 and 421-441; these read TLYTTAFQGLGALGSLYLYFV and FSLYNAFSVFSVCGVFGLYYL.

It is found in the mitochondrion membrane. In terms of biological role, required for correct meiotic chromosome segregation. Appears to also have role in sporulation. In Schizosaccharomyces pombe (strain 972 / ATCC 24843) (Fission yeast), this protein is Meiotically up-regulated gene 99 protein, mitochondrial (mug99).